Consider the following 1055-residue polypeptide: Inactive exonuclease DIS3L2 (1055 aa).

2 disordered regions span residues 1 to 109 (MKSA…SSPE) and 229 to 249 (SAAK…KARQ). Residues 17-32 (HKKKRNRPQKQNRRSK) show a composition bias toward basic residues. Residues 39-59 (EDAHVEESLDGRDSSRSKAKD) show a composition bias toward basic and acidic residues. Residues 97–108 (PRRSASPLLSSP) are compositionally biased toward low complexity. The CSD2 domain occupies 367–446 (YVQLMPADPR…PQINAILYQN (80 aa)). The region spanning 476-824 (RKDLRDLCVL…VHRALAAALE (349 aa)) is the RNB domain. Positions 488 and 497 each coordinate Mg(2+).

It belongs to the RNR ribonuclease family. DIS3L2 subfamily.

It localises to the cytoplasm. In terms of biological role, probable inactive 3'-5'-exoribonuclease. Is unable to complement the growth defect of a yeast mutant lacking RRP44 exonuclease. The chain is Inactive exonuclease DIS3L2 from Arabidopsis thaliana (Mouse-ear cress).